We begin with the raw amino-acid sequence, 2276 residues long: Poly [ADP-ribose] polymerase tankyrase (2276 aa).

Basic residues-rich tracts occupy residues Met-1–Ala-15 and Lys-87–Ser-98. 2 disordered regions span residues Met-1–Gly-20 and Ser-79–Asp-103. 15 ANK repeats span residues Lys-345 to Ile-374, Asp-378 to Met-407, Gln-411 to Lys-440, Ser-461 to Asp-490, Asn-498 to Gly-527, Lys-531 to Leu-560, Ser-564 to Ser-593, Trp-598 to Ala-627, Ser-675 to Val-725, Glu-729 to Asn-758, Lys-970 to Leu-999, Asn-1171 to Leu-1200, Asp-1204 to Glu-1233, Gly-1472 to Thr-1501, and Tyr-1505 to Leu-1535. The segment at Val-1570 to Val-1649 is disordered. 2 stretches are compositionally biased toward acidic residues: residues Ser-1576–Glu-1590 and Ser-1612–Ser-1622. An ANK 16 repeat occupies Lys-1662–Ile-1706. The WGR domain occupies Gly-1788 to Tyr-1889. Residues Lys-1910 to Cys-2045 enclose the PARP alpha-helical domain. Residues Ala-2047–Lys-2276 form the PARP catalytic domain.

Expressed throughout the head and tail, in germ cells and somatic cells.

Its subcellular location is the nucleus. The protein resides in the chromosome. The enzyme catalyses NAD(+) + (ADP-D-ribosyl)n-acceptor = nicotinamide + (ADP-D-ribosyl)n+1-acceptor + H(+).. It catalyses the reaction L-aspartyl-[protein] + NAD(+) = 4-O-(ADP-D-ribosyl)-L-aspartyl-[protein] + nicotinamide. The catalysed reaction is L-glutamyl-[protein] + NAD(+) = 5-O-(ADP-D-ribosyl)-L-glutamyl-[protein] + nicotinamide. Poly[ADP-ribose] polymerases modify various nuclear proteins by poly(ADP-ribosyl)ation, a post-translational modification synthesized after DNA damage that appears as an obligatory step in a detection/signaling pathway leading to the reparation of DNA strand breaks and programmed cell death. This Caenorhabditis elegans protein is Poly [ADP-ribose] polymerase tankyrase.